The primary structure comprises 146 residues: Anti-sigma F factor (146 aa).

This sequence belongs to the anti-sigma-factor family.

The catalysed reaction is L-seryl-[protein] + ATP = O-phospho-L-seryl-[protein] + ADP + H(+). The enzyme catalyses L-threonyl-[protein] + ATP = O-phospho-L-threonyl-[protein] + ADP + H(+). Its function is as follows. Binds to sigma F and blocks its ability to form an RNA polymerase holoenzyme (E-sigma F). Phosphorylates SpoIIAA on a serine residue. This phosphorylation may enable SpoIIAA to act as an anti-anti-sigma factor that counteracts SpoIIAB and thus releases sigma F from inhibition. The polypeptide is Anti-sigma F factor (Anoxybacillus flavithermus (strain DSM 21510 / WK1)).